The chain runs to 308 residues: UDP-N-acetylenolpyruvoylglucosamine reductase (308 aa).

The FAD-binding PCMH-type domain maps to 37-201 (RVGGPAQVLF…TQATFRGTPG (165 aa)). Arg181 is an active-site residue. The span at 216–233 (SREATQPIKSRTGGSTFK) shows a compositional bias: polar residues. A disordered region spans residues 216–236 (SREATQPIKSRTGGSTFKNPP). The active-site Proton donor is Ser230. The active site involves Glu300.

Belongs to the MurB family. It depends on FAD as a cofactor.

It is found in the cytoplasm. It catalyses the reaction UDP-N-acetyl-alpha-D-muramate + NADP(+) = UDP-N-acetyl-3-O-(1-carboxyvinyl)-alpha-D-glucosamine + NADPH + H(+). It participates in cell wall biogenesis; peptidoglycan biosynthesis. In terms of biological role, cell wall formation. This Azorhizobium caulinodans (strain ATCC 43989 / DSM 5975 / JCM 20966 / LMG 6465 / NBRC 14845 / NCIMB 13405 / ORS 571) protein is UDP-N-acetylenolpyruvoylglucosamine reductase.